Reading from the N-terminus, the 252-residue chain is ATP synthase subunit a (252 aa).

6 helical membrane-spanning segments follow: residues 29-49, 87-107, 116-136, 146-166, 183-205, and 219-239; these read FTNV…FLFI, FFPL…IGLF, QIMI…GYGF, LFVP…IEVI, MLAG…ELGI, and VAIT…FTVL.

The protein belongs to the ATPase A chain family. In terms of assembly, F-type ATPases have 2 components, CF(1) - the catalytic core - and CF(0) - the membrane proton channel. CF(1) has five subunits: alpha(3), beta(3), gamma(1), delta(1), epsilon(1). CF(0) has three main subunits: a(1), b(2) and c(9-12). The alpha and beta chains form an alternating ring which encloses part of the gamma chain. CF(1) is attached to CF(0) by a central stalk formed by the gamma and epsilon chains, while a peripheral stalk is formed by the delta and b chains.

The protein resides in the cell inner membrane. Functionally, key component of the proton channel; it plays a direct role in the translocation of protons across the membrane. The sequence is that of ATP synthase subunit a from Bartonella quintana (strain Toulouse) (Rochalimaea quintana).